Reading from the N-terminus, the 604-residue chain is Aspartate--tRNA(Asp/Asn) ligase (604 aa).

Glu-175 lines the L-aspartate pocket. The aspartate stretch occupies residues 199 to 202; it reads QQFK. L-aspartate is bound by residues Arg-221 and His-456. Residue 221-223 coordinates ATP; that stretch reads RDE. Residue Glu-496 coordinates ATP. Arg-503 is a binding site for L-aspartate. Position 548–551 (548–551) interacts with ATP; sequence GVDR.

This sequence belongs to the class-II aminoacyl-tRNA synthetase family. Type 1 subfamily. Homodimer.

It is found in the cytoplasm. The enzyme catalyses tRNA(Asx) + L-aspartate + ATP = L-aspartyl-tRNA(Asx) + AMP + diphosphate. Its function is as follows. Aspartyl-tRNA synthetase with relaxed tRNA specificity since it is able to aspartylate not only its cognate tRNA(Asp) but also tRNA(Asn). Reaction proceeds in two steps: L-aspartate is first activated by ATP to form Asp-AMP and then transferred to the acceptor end of tRNA(Asp/Asn). The polypeptide is Aspartate--tRNA(Asp/Asn) ligase (Methylobacterium nodulans (strain LMG 21967 / CNCM I-2342 / ORS 2060)).